Here is a 1038-residue protein sequence, read N- to C-terminus: Activated CDC42 kinase 1 (1038 aa).

An SAM-like domain region spans residues 1-110 (MQPEEGTGWL…TSPAPGGPAG (110 aa)). Positions 90 to 114 (PPHHSQSTFRKTSPAPGGPAGEGPL) are disordered. The Protein kinase domain occupies 126 to 385 (LRLLEKLGDG…PTFVALRDFL (260 aa)). Residues 132–140 (LGDGSFGVV) and Lys158 contribute to the ATP site. Asp252 serves as the catalytic Proton acceptor. A Phosphotyrosine; by SRC and autocatalysis modification is found at Tyr284. Positions 388 to 448 (AQPTDMRALQ…PRNVVTSVAG (61 aa)) constitute an SH3 domain. In terms of domain architecture, CRIB spans 454-466 (ISQPLQNSFIHTG). The interval 497–535 (LSVELSTSRPPQHLGGVKKPTYDPVSEDQDPLSSDFKRL) is disordered. Tyr518 carries the post-translational modification Phosphotyrosine. Residues 623 to 652 (DWDARPLPPPPAYDDVAQDEDDFEICSINS) are required for interaction with SRC. The tract at residues 632-635 (PPAY) is required for interaction with NEDD4. 2 disordered regions span residues 659–702 (VPAG…SSAQ) and 718–840 (LQAP…GPRA). Ser724 carries the phosphoserine modification. Positions 733-876 (GDDKPQVPPR…SYLERYQRFL (144 aa)) are EBD domain. Pro residues-rich tracts occupy residues 738–749 (QVPPRVPIPPRP), 772–783 (PASPPRVPPREP), and 794–805 (PLVPPGSSPLPP). At Tyr827 the chain carries Phosphotyrosine. Arg839 is modified (omega-N-methylarginine). 2 positions are modified to phosphotyrosine: Tyr859 and Tyr872. Ser881 carries the phosphoserine modification. Residues 917 to 957 (LDPKANFSTNNSNPGARPPPPRATARLPQRGCPGDGPEAGR) are disordered. Positions 958–996 (PADKIQMAMVHGVTTEECQAALQCHGWSVQRAAQYLKVE) constitute a UBA domain.

Belongs to the protein kinase superfamily. Tyr protein kinase family. Interacts with NEDD4 (via WW3 domain). NEDD4L and EGF promote association with NEDD4. Homodimer. Interacts with AR, CDC42, WWASL and WWOX. Interacts with CSPG4 (activated). Interacts with MERTK (activated); stimulates autophosphorylation. May interact (phosphorylated) with HSP90AB1; maintains kinase activity. Interacts with NPHP1. Interacts with SNX9 (via SH3 domain). Interacts with SRC (via SH2 and SH3 domain). Interacts with EGFR, and this interaction is dependent on EGF stimulation and kinase activity of EGFR. Interacts (via kinase domain) with AKT1. Part of a collagen stimulated complex involved in cell migration composed of CDC42, CRK, TNK2 and BCAR1/p130cas. Interacts with BCAR1/p130cas via SH3 domains. Forms complexes with GRB2 and numerous receptor tyrosine kinases (RTK) including LTK, AXL or PDGFRL, in which GRB2 promotes RTK recruitment by TNK2. Requires Mg(2+) as cofactor. Post-translationally, autophosphorylation regulates kinase activity. Phosphorylation on Tyr-518 is required for interaction with SRC and is observed during association with clathrin-coated pits. In terms of processing, polyubiquitinated by NEDD4 and NEDD4L. Degradation can be induced by EGF and is lysosome-dependent. The Tyr-284 phosphorylated form shows a significant increase in expression in breast cancers during the progressive stages i.e. normal to hyperplasia (ADH), ductal carcinoma in situ (DCIS), invasive ductal carcinoma (IDC) and lymph node metastatic (LNMM) stages. It also shows a significant increase in expression in prostate cancers during the progressive stages.

The protein localises to the cell membrane. It localises to the nucleus. The protein resides in the endosome. It is found in the cell junction. Its subcellular location is the adherens junction. The protein localises to the cytoplasmic vesicle membrane. It localises to the cytoplasmic vesicle. The protein resides in the clathrin-coated vesicle. It is found in the membrane. Its subcellular location is the clathrin-coated pit. The protein localises to the cytoplasm. It localises to the perinuclear region. The protein resides in the cytosol. It catalyses the reaction L-tyrosyl-[protein] + ATP = O-phospho-L-tyrosyl-[protein] + ADP + H(+). The enzyme catalyses L-seryl-[protein] + ATP = O-phospho-L-seryl-[protein] + ADP + H(+). It carries out the reaction L-threonyl-[protein] + ATP = O-phospho-L-threonyl-[protein] + ADP + H(+). Its activity is regulated as follows. Inhibited by AIM-100 (4-amino-5,6-biaryl-furo[2,3-d]pyrimidine), which suppresses activating phosphorylation at Tyr-284. Repressed by dasatinib. Non-receptor tyrosine-protein and serine/threonine-protein kinase that is implicated in cell spreading and migration, cell survival, cell growth and proliferation. Transduces extracellular signals to cytosolic and nuclear effectors. Phosphorylates AKT1, AR, MCF2, WASL and WWOX. Implicated in trafficking and clathrin-mediated endocytosis through binding to epidermal growth factor receptor (EGFR) and clathrin. Binds to both poly- and mono-ubiquitin and regulates ligand-induced degradation of EGFR, thereby contributing to the accumulation of EGFR at the limiting membrane of early endosomes. Downstream effector of CDC42 which mediates CDC42-dependent cell migration via phosphorylation of BCAR1. May be involved both in adult synaptic function and plasticity and in brain development. Activates AKT1 by phosphorylating it on 'Tyr-176'. Phosphorylates AR on 'Tyr-267' and 'Tyr-363' thereby promoting its recruitment to androgen-responsive enhancers (AREs). Phosphorylates WWOX on 'Tyr-287'. Phosphorylates MCF2, thereby enhancing its activity as a guanine nucleotide exchange factor (GEF) toward Rho family proteins. Contributes to the control of AXL receptor levels. Confers metastatic properties on cancer cells and promotes tumor growth by negatively regulating tumor suppressor such as WWOX and positively regulating pro-survival factors such as AKT1 and AR. Phosphorylates WASP. The sequence is that of Activated CDC42 kinase 1 (TNK2) from Homo sapiens (Human).